We begin with the raw amino-acid sequence, 388 residues long: Succinate--CoA ligase [ADP-forming] subunit beta (388 aa).

In terms of domain architecture, ATP-grasp spans 9–244 (KEILRKYNVP…LDEEDANEIE (236 aa)). ATP is bound by residues K46, 53 to 55 (GRG), E99, A102, and E107. Residues N199 and D213 each contribute to the Mg(2+) site. Residues N264 and 321-323 (GIM) each bind substrate.

It belongs to the succinate/malate CoA ligase beta subunit family. In terms of assembly, heterotetramer of two alpha and two beta subunits. The cofactor is Mg(2+).

The catalysed reaction is succinate + ATP + CoA = succinyl-CoA + ADP + phosphate. The enzyme catalyses GTP + succinate + CoA = succinyl-CoA + GDP + phosphate. It participates in carbohydrate metabolism; tricarboxylic acid cycle; succinate from succinyl-CoA (ligase route): step 1/1. Its function is as follows. Succinyl-CoA synthetase functions in the citric acid cycle (TCA), coupling the hydrolysis of succinyl-CoA to the synthesis of either ATP or GTP and thus represents the only step of substrate-level phosphorylation in the TCA. The beta subunit provides nucleotide specificity of the enzyme and binds the substrate succinate, while the binding sites for coenzyme A and phosphate are found in the alpha subunit. This is Succinate--CoA ligase [ADP-forming] subunit beta from Cupriavidus necator (strain ATCC 17699 / DSM 428 / KCTC 22496 / NCIMB 10442 / H16 / Stanier 337) (Ralstonia eutropha).